The primary structure comprises 552 residues: HTH-type transcriptional regulator SgrR (552 aa).

One can recognise an HTH marR-type domain in the interval 1 to 116 (MPSARLQQQF…LVSHLGRSFR (116 aa)). The segment at residues 26-49 (LNELAALLSCSRRHMRTLLNTMQD) is a DNA-binding region (H-T-H motif). Positions 163–492 (ELEADIAHHW…IDWQVDAARW (330 aa)) are solute-binding.

Activates the small RNA gene sgrS under glucose-phosphate stress conditions as well as yfdZ. Represses its own transcription under both stress and non-stress conditions. Might act as a sensor of the intracellular accumulation of phosphoglucose by binding these molecules in its C-terminal solute-binding domain. This is HTH-type transcriptional regulator SgrR from Escherichia coli O157:H7.